The primary structure comprises 468 residues: MASRLTPLTLLLLLLLAGDRVTSDMIVGPGNLQEGESEGDSQKGGILDGESIQGNEDSPTLPITNLTVVPATVTKPFSQPATEPVQSTIQPTAEPFCLAPVTSCSDSEIRSAEAVLGEALTDFSLRLYQDFSVLKKRETNFIFSPFSIASLLTQILLGAGGETRVSLEHLLSYPQNFSCVHHALRAFMSEGFTSFSQIFHSSDLTIKDTFAEASQRLYGSSPRPLGNDSTASLELINDWVAKKTNLRIRRLLDSLPEDTRLILLNAVALSAKWKIAFDKGRTSTKPFHLKSSAIKVPMMNSKKYPVASFTDRTLNRPGGRLQLSHNLSFVILVPQTVKHHLQDLEQALSTAVFKAVIKKLEMTKFHPTHLTMPRIKVQSSQDMLDYFDFIYDVNLCGLTEDPDVQVSGIRHQATLELTESGVDATAASVVSVARNLLLFEVQQPFLFLLWDQQHKFPVFMGRVYDPKG.

Positions 1-23 (MASRLTPLTLLLLLLLAGDRVTS) are cleaved as a signal peptide. A disordered region spans residues 27-60 (VGPGNLQEGESEGDSQKGGILDGESIQGNEDSPT). N-linked (GlcNAc...) asparagine glycosylation is found at Asn-65, Asn-176, Asn-227, and Asn-326. 2 cysteine pairs are disulfide-bonded: Cys-97/Cys-396 and Cys-104/Cys-179.

Belongs to the serpin family. In terms of processing, N- and O-glycosylated.

It localises to the secreted. In terms of biological role, may play a potentially crucial role in regulating important physiological pathways including complement activation, blood coagulation, fibrinolysis and the generation of kinins. The sequence is that of Factor XIIa inhibitor from Bos taurus (Bovine).